The following is a 262-amino-acid chain: Thiamine thiazole synthase (262 aa).

Residues serine 40, 59 to 60 (ER), glycine 67, valine 133, and 159 to 161 (HID) each bind NAD(+). Fe cation is bound by residues aspartate 161 and histidine 176. NAD(+) contacts are provided by serine 179 and methionine 226. Arginine 236 contacts glycine.

The protein belongs to the THI4 family. Homooctamer; tetramer of dimers. Fe(2+) serves as cofactor.

The enzyme catalyses hydrogen sulfide + glycine + NAD(+) = ADP-5-ethyl-4-methylthiazole-2-carboxylate + nicotinamide + 3 H2O + H(+). It participates in cofactor biosynthesis; thiamine diphosphate biosynthesis. Involved in the biosynthesis of the thiazole moiety of thiamine. Catalyzes the conversion of NAD and glycine to adenosine diphosphate 5-(2-hydroxyethyl)-4-methylthiazole-2-carboxylate (ADT), an adenylated thiazole intermediate, using free sulfide as a source of sulfur. This is Thiamine thiazole synthase from Methanococcus maripaludis (strain C7 / ATCC BAA-1331).